Here is a 442-residue protein sequence, read N- to C-terminus: Septin-8 (442 aa).

The segment covering 1–16 (MAATDLERVSSAEPEP) has biased composition (basic and acidic residues). The tract at residues 1–23 (MAATDLERVSSAEPEPRSLSLGG) is disordered. An N-acetylalanine modification is found at Ala2. Ser10 carries the phosphoserine modification. The Septin-type G domain occupies 41–307 (QGFSFNILCV…ELYRRCKLEE (267 aa)). The segment at 51–58 (GETGIGKS) is G1 motif. GTP contacts are provided by residues 51-58 (GETGIGKS), Gly106, 187-195 (KADTISKSE), Gly241, and Arg256. The segment at 103 to 106 (DAVG) is G3 motif. The G4 motif stretch occupies residues 186 to 189 (AKAD). The stretch at 322 to 410 (LQETYEAKRK…RKAAVEALQS (89 aa)) forms a coiled coil. The segment covering 377–391 (HQEEKRKVEEKRREL) has biased composition (basic and acidic residues). The interval 377–442 (HQEEKRKVEE…WSSIYSVTIP (66 aa)) is disordered. Polar residues-rich tracts occupy residues 408–420 (LQSQ…SQQP) and 432–442 (GWSSIYSVTIP).

Belongs to the TRAFAC class TrmE-Era-EngA-EngB-Septin-like GTPase superfamily. Septin GTPase family. In terms of assembly, septins polymerize into heterooligomeric protein complexes that form filaments, and can associate with cellular membranes, actin filaments and microtubules. GTPase activity is required for filament formation. Interacts with CDK14, SEPTIN4, SEPTIN5 and SEPTIN7. Interacts with VAMP2; the interaction inhibits interaction of VAMP2 with SYP. Interacts with STX1A.

It is found in the cytoplasm. The protein resides in the cytoskeleton. Its subcellular location is the synapse. It localises to the cell projection. The protein localises to the axon. It is found in the cytoplasmic vesicle. The protein resides in the secretory vesicle. Its subcellular location is the synaptic vesicle membrane. It localises to the presynapse. Its function is as follows. Filament-forming cytoskeletal GTPase. May play a role in platelet secretion. Seems to participate in the process of SNARE complex formation in synaptic vesicles. The protein is Septin-8 of Otolemur garnettii (Small-eared galago).